Consider the following 267-residue polypeptide: Corrinoid adenosyltransferase EutT (267 aa).

A divalent metal cation contacts are provided by Cys80 and Cys83.

It belongs to the Cob(I)alamin adenosyltransferase family. EutT subfamily. Homodimer. A divalent metal cation serves as cofactor.

The protein resides in the bacterial microcompartment. The catalysed reaction is 2 cob(II)alamin + reduced [electron-transfer flavoprotein] + 2 ATP + 2 H2O = 2 adenosylcob(III)alamin + oxidized [electron-transfer flavoprotein] + 2 phosphate + 2 diphosphate + 3 H(+). It carries out the reaction 2 cob(II)inamide + reduced [electron-transfer flavoprotein] + 2 ATP + 2 H2O = 2 adenosylcob(III)inamide + oxidized [electron-transfer flavoprotein] + 2 phosphate + 2 diphosphate + 3 H(+). The protein operates within amine and polyamine degradation; ethanolamine degradation. Converts cyanocobalamin (CN-B12) to adenosylcobalamin (AdoCbl), the inducer of the eut operon. Is not active on cobinamide nor other intermediates in the adenosylcobalamin synthetic pathway. Allows full induction of the eut operon. This is Corrinoid adenosyltransferase EutT (eutT) from Escherichia coli O6:H1 (strain CFT073 / ATCC 700928 / UPEC).